The following is an 85-amino-acid chain: Platelet factor 4 (85 aa).

Disulfide bonds link C25–C51 and C27–C67. At S41 the chain carries Phosphoserine. 76-82 (KKIIKRL) provides a ligand contact to heparin.

It belongs to the intercrine alpha (chemokine CxC) family. In terms of assembly, homotetramer. Interacts with TNFAIP6 (via Link domain). Interacts with CCR1. Interacts with CXCR3. Interacts with THBD; this interaction enhances generation of activated protein C.

It is found in the secreted. In terms of biological role, chemokine released during platelet aggregation that plays a role in different biological processes including hematopoiesis, cell proliferation, differentiation, and activation. Acts via different functional receptors including CCR1, CXCR3A or CXCR3B. Upon interaction with CXCR3A receptor, induces activated T-lymphocytes migration mediated via downstream Ras/extracellular signal-regulated kinase (ERK) signaling. Neutralizes the anticoagulant effect of heparin by binding more strongly to heparin than to the chondroitin-4-sulfate chains of the carrier molecule. Plays a role in the inhibition of hematopoiesis and in the maintenance of hematopoietic stem cell (HSC) quiescence. Chemotactic for neutrophils and monocytes via CCR1. Inhibits endothelial cell proliferation. In cooperation with toll-like receptor 8/TLR8, induces chromatin remodeling and activates inflammatory gene expression via the TBK1-IRF5 axis. In addition, induces myofibroblast differentiation and collagen synthesis in different precursor cells, including endothelial cells, by stimulating endothelial-to-mesenchymal transition. Interacts with thrombomodulin/THBD to enhance the activation of protein C and thus potentiates its anticoagulant activity. This chain is Platelet factor 4 (PF4), found in Ovis aries (Sheep).